The following is a 61-amino-acid chain: Hepcidin (61 aa).

A disordered region spans residues 1-24 (LQVLTEEVGSIDSPVGEHQQPGGE). The propeptide occupies 1 to 34 (LQVLTEEVGSIDSPVGEHQQPGGESMRLPEHFRF). 4 disulfides stabilise this stretch: cysteine 43-cysteine 59, cysteine 46-cysteine 49, cysteine 47-residue 55, and cysteine 50-cysteine 58.

This sequence belongs to the hepcidin family.

It localises to the secreted. In terms of biological role, seems to act as a signaling molecule involved in the maintenance of iron homeostasis. Seems to be required in conjunction with HFE to regulate both intestinal iron absorption and iron storage in macrophages. May also have antimicrobial activity. This Oncorhynchus mykiss (Rainbow trout) protein is Hepcidin (hamp).